A 168-amino-acid polypeptide reads, in one-letter code: Phosphopantetheine adenylyltransferase (168 aa).

Substrate is bound at residue T13. ATP contacts are provided by residues 13–14 and H21; that span reads TF. Substrate contacts are provided by K45, L78, and R92. ATP is bound by residues 93-95, E103, and 128-134; these read GLR and TQFISSS.

Belongs to the bacterial CoaD family. Homohexamer. Requires Mg(2+) as cofactor.

It localises to the cytoplasm. The catalysed reaction is (R)-4'-phosphopantetheine + ATP + H(+) = 3'-dephospho-CoA + diphosphate. It participates in cofactor biosynthesis; coenzyme A biosynthesis; CoA from (R)-pantothenate: step 4/5. Reversibly transfers an adenylyl group from ATP to 4'-phosphopantetheine, yielding dephospho-CoA (dPCoA) and pyrophosphate. The polypeptide is Phosphopantetheine adenylyltransferase (Wolbachia pipientis subsp. Culex pipiens (strain wPip)).